A 1188-amino-acid chain; its full sequence is Probable RNA helicase armi (1188 aa).

723 to 730 serves as a coordination point for ATP; sequence GPPGSGKT. The short motif at 862–865 is the DEAG box element; it reads DEAG.

This sequence belongs to the DNA2/NAM7 helicase family. SDE3 subfamily. In terms of assembly, forms a complex with piwi and fs(1)Yb; this interaction is required for proper piRNA loading and nuclear localization of piwi. The interaction of piwi and fs(1)Yb is likely to occur via armi. As to expression, abundant in oocytes and syncytial blastoderm. Expressed at low level throughout development, including somatic tissues. First apparent early in oogenesis, in the cytoplasm of stem cells and mitotically dividing cystoblasts. In regions 2a and 2b of the germarium, it is most concentrated in the center of the germline cysts, where the pro-oocyte is located. In stage 1 and early stage 2 egg chambers, it accumulates at the anterior of the oocyte, near the ring canals. It also extends through the ring canals forming a branched structure that links the early oocyte with adjacent nurse cells. In stage 3 cysts, it accumulates at the posterior cortex and localizes to extensions that pass through the oocyte into the nurse cells. Through stages 4 to 7, it continues to be somewhat enriched at the posterior cortex of the oocyte, but at significantly lower level. In stage 9 to 10 egg chambers, it is found throughout the cytoplasm of the oocyte and nurse cells, with slight enrichment at the oocyte cortex.

It is found in the cytoplasm. It carries out the reaction ATP + H2O = ADP + phosphate + H(+). Its function is as follows. Probable RNA helicase required for axial polarization of the oocyte during early and mid oogenesis. Plays a central role in RNA interference (RNAi) process, a process that mediates mRNA destruction of translational repression. Required for the assembly of the RISC complex, a complex required for target RNA destruction or repression. May be required in the RISC assembly to unwind miRNAs, in the production of single-stranded miRNA from the double-stranded miRNA, a key step in RISC formation. Required both for the translational control of oskar (osk) mRNA and cytoskeletal polarization in the oocyte. Required for somatic primary piRNA biogenesis. Involved in repression of long interspersed nuclear elements (LINEs) including HeT-A, I-element and TART LINEs. This is Probable RNA helicase armi from Drosophila melanogaster (Fruit fly).